Here is a 186-residue protein sequence, read N- to C-terminus: Ribosome-recycling factor (186 aa).

Belongs to the RRF family.

The protein localises to the cytoplasm. Its function is as follows. Responsible for the release of ribosomes from messenger RNA at the termination of protein biosynthesis. May increase the efficiency of translation by recycling ribosomes from one round of translation to another. The polypeptide is Ribosome-recycling factor (Rickettsia typhi (strain ATCC VR-144 / Wilmington)).